Here is a 337-residue protein sequence, read N- to C-terminus: Monoacylglycerol lipase abhd6-A (337 aa).

Residues 1–19 lie on the Extracellular side of the membrane; it reads MDLDVLNMFLVAGGTLLVP. Residues 20–42 form a helical; Signal-anchor for type II membrane protein membrane-spanning segment; it reads ILAFVTSFLLWPAALIKIYYWYW. The Cytoplasmic segment spans residues 43 to 337; sequence RRALGMQVKF…QSTENNKKHE (295 aa). In terms of domain architecture, AB hydrolase-1 spans 73–313; sequence SVLMLHGFSA…CGHSVVMERP (241 aa). Serine 148 (nucleophile) is an active-site residue. Catalysis depends on charge relay system residues aspartate 278 and histidine 306.

It belongs to the AB hydrolase superfamily.

Its subcellular location is the late endosome membrane. It localises to the lysosome membrane. The protein localises to the mitochondrion membrane. The catalysed reaction is Hydrolyzes glycerol monoesters of long-chain fatty acids.. It catalyses the reaction 1-octanoylglycerol + H2O = octanoate + glycerol + H(+). It carries out the reaction 1-decanoylglycerol + H2O = decanoate + glycerol + H(+). The enzyme catalyses 1-dodecanoylglycerol + H2O = dodecanoate + glycerol + H(+). The catalysed reaction is 1-tetradecanoylglycerol + H2O = tetradecanoate + glycerol + H(+). It catalyses the reaction 2-hexadecanoylglycerol + H2O = glycerol + hexadecanoate + H(+). It carries out the reaction 2-(9Z-octadecenoyl)-glycerol + H2O = glycerol + (9Z)-octadecenoate + H(+). The enzyme catalyses 1-(9Z-octadecenoyl)-glycerol + H2O = glycerol + (9Z)-octadecenoate + H(+). The catalysed reaction is 2-(9Z,12Z-octadecadienoyl)-glycerol + H2O = (9Z,12Z)-octadecadienoate + glycerol + H(+). It catalyses the reaction 2-(5Z,8Z,11Z,14Z-eicosatetraenoyl)-glycerol + H2O = glycerol + (5Z,8Z,11Z,14Z)-eicosatetraenoate + H(+). It carries out the reaction 1-(5Z,8Z,11Z,14Z-eicosatetraenoyl)-glycerol + H2O = glycerol + (5Z,8Z,11Z,14Z)-eicosatetraenoate + H(+). The enzyme catalyses 1-(9Z,12Z-octadecadienoyl)-glycerol + H2O = (9Z,12Z)-octadecadienoate + glycerol + H(+). The catalysed reaction is 3-(9Z-octadecenoyl)-sn-glycero-1-phospho-(3'-(9Z-octadecenoyl)-1'-sn-glycerol) + H2O = 3-(9Z-octadecenoyl)-sn-glycero-1-phospho-(1'-sn-glycerol) + (9Z)-octadecenoate + H(+). It catalyses the reaction (S,S)-2-(9Z-octadecenoyl)-sn-glycero-1-phospho-(2'-(9Z-octadecenoyl)-1'-sn-glycerol) + H2O = (S,S)-2-(9Z-octadecenoyl)-sn-glycero-1-phospho-(1'-sn-glycerol) + (9Z)-octadecenoate + H(+). It carries out the reaction (R,R)-2-(9Z-octadecenoyl)-sn-glycero-3-phospho-(2'-(9Z-octadecenoyl)-3'-sn-glycerol) + H2O = (R,R)-2-(9Z-octadecenoyl)-sn-glycero-3-phospho-(3'-sn-glycerol) + (9Z)-octadecenoate + H(+). Functionally, lipase that preferentially hydrolysis medium-chain saturated monoacylglycerols including 2-arachidonoylglycerol. Through 2-arachidonoylglycerol degradation may regulate endocannabinoid signaling pathways. Also has a lysophosphatidyl lipase activity with a preference for lysophosphatidylglycerol among other lysophospholipids. Also able to degrade bis(monoacylglycero)phosphate (BMP) and constitutes the major enzyme for BMP catabolism. BMP, also known as lysobisphosphatidic acid, is enriched in late endosomes and lysosomes and plays a key role in the formation of intraluminal vesicles and in lipid sorting. In Xenopus laevis (African clawed frog), this protein is Monoacylglycerol lipase abhd6-A (abhd6-a).